The primary structure comprises 339 residues: Adenylosuccinate synthetase (339 aa).

Residues 12–18 (GDEGKGS) and 42–44 (GHS) contribute to the GTP site. The active-site Proton acceptor is D13. Mg(2+) is bound by residues D13 and G42. Residues 13-16 (DEGK), 40-43 (NAGH), T127, R141, Q179, T194, and R256 each bind IMP. H43 (proton donor) is an active-site residue. 252-258 (TVTGRRR) contributes to the substrate binding site. GTP is bound by residues R258, 284-286 (MLD), and 324-326 (KTG).

It belongs to the adenylosuccinate synthetase family. Homodimer. Mg(2+) serves as cofactor.

The protein resides in the cytoplasm. It carries out the reaction IMP + L-aspartate + GTP = N(6)-(1,2-dicarboxyethyl)-AMP + GDP + phosphate + 2 H(+). It participates in purine metabolism; AMP biosynthesis via de novo pathway; AMP from IMP: step 1/2. Its function is as follows. Plays an important role in the de novo pathway of purine nucleotide biosynthesis. Catalyzes the first committed step in the biosynthesis of AMP from IMP. In Thermococcus onnurineus (strain NA1), this protein is Adenylosuccinate synthetase.